Consider the following 894-residue polypeptide: Valine--tRNA ligase (894 aa).

Positions 1–22 (MKSIQTPSKSHTNTKETPVMSQ) are enriched in polar residues. Residues 1–28 (MKSIQTPSKSHTNTKETPVMSQEETKGY) are disordered. Positions 69–79 (PNVTGSLHIGH) match the 'HIGH' region motif. The 'KMSKS' region signature appears at 554–558 (KMSKS). Position 557 (lysine 557) interacts with ATP. Residues 832–894 (IISRLEKQQE…VKVELQGIKG (63 aa)) adopt a coiled-coil conformation.

The protein belongs to the class-I aminoacyl-tRNA synthetase family. ValS type 1 subfamily. In terms of assembly, monomer.

Its subcellular location is the cytoplasm. The enzyme catalyses tRNA(Val) + L-valine + ATP = L-valyl-tRNA(Val) + AMP + diphosphate. Functionally, catalyzes the attachment of valine to tRNA(Val). As ValRS can inadvertently accommodate and process structurally similar amino acids such as threonine, to avoid such errors, it has a 'posttransfer' editing activity that hydrolyzes mischarged Thr-tRNA(Val) in a tRNA-dependent manner. The polypeptide is Valine--tRNA ligase (Wolinella succinogenes (strain ATCC 29543 / DSM 1740 / CCUG 13145 / JCM 31913 / LMG 7466 / NCTC 11488 / FDC 602W) (Vibrio succinogenes)).